The chain runs to 245 residues: Ninjurin-A (245 aa).

Topologically, residues 1-170 (MSNLEHITLE…TSSQHPYFYP (170 aa)) are extracellular. N-linked (GlcNAc...) asparagine glycans are attached at residues N19 and N28. The interval 32 to 101 (HSYGGAIDGR…NVNVNVPNGG (70 aa)) is disordered. Over residues 92–101 (NVNVNVPNGG) the composition is skewed to low complexity. Positions 135-146 (KKTLAQGMMDLA) are helix alpha1. The segment at 149-165 (SANANQLRYVLETSSQH) is helix alpha2. A helical transmembrane segment spans residues 171 to 191 (SLLFISLSIIFQIAVGVGLIL). The Cytoplasmic portion of the chain corresponds to 192-211 (NGQYNIKNGHDICRANRINN). Residues 212 to 232 (YTVSGIFIVTVVNVLISAFTV) form a helical membrane-spanning segment. At 233–245 (DRDTVPALPANTT) the chain is on the extracellular side.

This sequence belongs to the ninjurin family. In terms of assembly, homooligomer. In terms of processing, cleaved by Mmp1 protease to generate the Secreted ninjurin-A form.

The protein localises to the cell membrane. The protein resides in the secreted. Its function is as follows. Effector of non-apoptotic necrotic cell death that mediates plasma membrane rupture (cytolysis): oligomerizes in response to death stimuli and promotes plasma membrane rupture by introducing hydrophilic faces of 2 alpha helices into the hydrophobic membrane, leading to release intracellular molecules that propagate the inflammatory response. Also acts as a homophilic transmembrane adhesion molecule that promotes cell adhesion by mediating homophilic interactions via its extracellular region. Secreted form generated by cleavage, which acts as a negative regulator of cell adhesion. Promotes the loss of cell adhesion in a cell non-autonomous manner. This Drosophila melanogaster (Fruit fly) protein is Ninjurin-A.